The following is a 312-amino-acid chain: Coiled-coil domain-containing protein 160 homolog (312 aa).

The stretch at 126–281 (SEGAKFKNQL…EERKREKTHS (156 aa)) forms a coiled coil.

The protein belongs to the CCDC160 family.

This is Coiled-coil domain-containing protein 160 homolog from Xenopus tropicalis (Western clawed frog).